The primary structure comprises 122 residues: Large ribosomal subunit protein eL34 (122 aa).

This sequence belongs to the eukaryotic ribosomal protein eL34 family. As to quaternary structure, component of the large ribosomal subunit. Mature ribosomes consist of a small (40S) and a large (60S) subunit. The 40S subunit contains about 32 different proteins and 1 molecule of RNA (18S). The 60S subunit contains 45 different proteins and 3 molecules of RNA (25S, 5.8S and 5S).

The protein resides in the cytoplasm. Component of the ribosome, a large ribonucleoprotein complex responsible for the synthesis of proteins in the cell. The small ribosomal subunit (SSU) binds messenger RNAs (mRNAs) and translates the encoded message by selecting cognate aminoacyl-transfer RNA (tRNA) molecules. The large subunit (LSU) contains the ribosomal catalytic site termed the peptidyl transferase center (PTC), which catalyzes the formation of peptide bonds, thereby polymerizing the amino acids delivered by tRNAs into a polypeptide chain. The nascent polypeptides leave the ribosome through a tunnel in the LSU and interact with protein factors that function in enzymatic processing, targeting, and the membrane insertion of nascent chains at the exit of the ribosomal tunnel. The chain is Large ribosomal subunit protein eL34 from Candida albicans (strain SC5314 / ATCC MYA-2876) (Yeast).